The chain runs to 73 residues: Large ribosomal subunit protein bL31 (73 aa).

Zn(2+) is bound by residues Cys-16, Cys-18, Cys-37, and Cys-40.

This sequence belongs to the bacterial ribosomal protein bL31 family. Type A subfamily. In terms of assembly, part of the 50S ribosomal subunit. Requires Zn(2+) as cofactor.

Its function is as follows. Binds the 23S rRNA. The protein is Large ribosomal subunit protein bL31 of Blochmanniella floridana.